Consider the following 207-residue polypeptide: GTP cyclohydrolase 1 (207 aa).

Residues C88, H91, and C162 each contribute to the Zn(2+) site.

It belongs to the GTP cyclohydrolase I family. Toroid-shaped homodecamer, composed of two pentamers of five dimers.

It catalyses the reaction GTP + H2O = 7,8-dihydroneopterin 3'-triphosphate + formate + H(+). It participates in cofactor biosynthesis; 7,8-dihydroneopterin triphosphate biosynthesis; 7,8-dihydroneopterin triphosphate from GTP: step 1/1. This Sulfurisphaera tokodaii (strain DSM 16993 / JCM 10545 / NBRC 100140 / 7) (Sulfolobus tokodaii) protein is GTP cyclohydrolase 1.